Here is a 1375-residue protein sequence, read N- to C-terminus: Mediator of RNA polymerase II transcription subunit 13 (1375 aa).

The disordered stretch occupies residues 1–51 (MKASEMARPPMRPGNPHAFASPATTPSRTASPNNAQGANVRTTQGGNQAGA). Polar residues predominate over residues 22-51 (PATTPSRTASPNNAQGANVRTTQGGNQAGA). 2 coiled-coil regions span residues 182 to 216 (ADDS…WLSR) and 297 to 324 (QLER…KDEA). Over residues 313–324 (AEEDAMRRKDEA) the composition is skewed to basic and acidic residues. Disordered regions lie at residues 313–333 (AEED…SSPF), 350–370 (YPTP…DTPS), 397–417 (YTTT…APLE), 537–581 (ATSP…PASL), 660–689 (RAVS…VDTH), 841–862 (QAKG…IPSN), and 1233–1285 (TPTT…AADP). Residues 397-411 (YTTTDNQQHASTSPT) are compositionally biased toward polar residues. Residues 666 to 685 (SASDSESETSDMSEGSPEDP) are compositionally biased toward acidic residues. The span at 1233-1259 (TPTTPAPSNSSAQANTNTPGSTPQTGV) shows a compositional bias: polar residues.

It belongs to the Mediator complex subunit 13 family. As to quaternary structure, component of the SRB8-11 complex, which itself associates with the Mediator complex.

Its subcellular location is the nucleus. Functionally, component of the SRB8-11 complex. The SRB8-11 complex is a regulatory module of the Mediator complex which is itself involved in regulation of basal and activated RNA polymerase II-dependent transcription. The SRB8-11 complex may be involved in the transcriptional repression of a subset of genes regulated by Mediator. It may inhibit the association of the Mediator complex with RNA polymerase II to form the holoenzyme complex. This Phaeosphaeria nodorum (strain SN15 / ATCC MYA-4574 / FGSC 10173) (Glume blotch fungus) protein is Mediator of RNA polymerase II transcription subunit 13 (SSN2).